A 182-amino-acid chain; its full sequence is Prorelaxin (182 aa).

The signal sequence occupies residues 1–24 (MPRLFSYLLGVWLLLSQLPREIPG). Glutamine 25 is modified (pyrrolidone carboxylic acid). 3 disulfide bridges follow: cysteine 34–cysteine 169, cysteine 46–cysteine 182, and cysteine 168–cysteine 173. Positions 57–154 (SLEEPQLETG…LKNLGLDKHS (98 aa)) are cleaved as a propeptide — connecting peptide. A propeptide spanning residues 159 to 160 (LF) is cleaved from the precursor.

The protein belongs to the insulin family. As to quaternary structure, heterodimer of a B chain and an A chain linked by two disulfide bonds.

It is found in the secreted. Its function is as follows. Relaxin is an ovarian hormone that acts with estrogen to produce dilatation of the birth canal in many mammals. In Sus scrofa (Pig), this protein is Prorelaxin (RLN).